The primary structure comprises 247 residues: TLC domain-containing protein 1 (247 aa).

The N-terminal stretch at 1 to 35 (MPRLLHPALPLLLGATLTFRALRRALCRLPLPVHV) is a signal peptide. Over 36 to 46 (RADPLRTWRWH) the chain is Extracellular. The 195-residue stretch at 40–234 (LRTWRWHNLL…LLRSDFCPEH (195 aa)) folds into the TLC domain. The chain crosses the membrane as a helical span at residues 47–67 (NLLVSFAHSIVSGIWALLCVW). Residues 68–83 (QTPDMLVEIETAWSLS) are Cytoplasmic-facing. Residues 84-104 (GYLLVCFSAGYFIHDTVDIVA) traverse the membrane as a helical segment. The Extracellular portion of the chain corresponds to 105-123 (SGQTRASWEYLVHHVMAMG). The helical intramembrane region spans 124-144 (AFFSGIFWSSFVGGGVLTLLV). At 145-173 (EVSNIFLTIRMMMKISNAQDHLLYRVNKY) the chain is on the extracellular side. A helical transmembrane segment spans residues 174–194 (VNLVMYFLFRLAPQAYLTHFF). At 195–201 (LRYVNQR) the chain is on the cytoplasmic side. Residues 202 to 222 (TLGTFLLGILLMLDVMIIIYF) traverse the membrane as a helical segment. The Extracellular portion of the chain corresponds to 223–247 (SRLLRSDFCPEHVPKKQHKDKFLTE).

Its subcellular location is the cell membrane. In terms of biological role, regulates the composition and fluidity of the plasma membrane. Inhibits the incorporation of membrane-fluidizing phospholipids containing omega-3 long-chain polyunsaturated fatty acids (LCPUFA) and thereby promotes membrane rigidity. Does not appear to have any effect on LCPUFA synthesis. This chain is TLC domain-containing protein 1 (TLCD1), found in Homo sapiens (Human).